Here is a 795-residue protein sequence, read N- to C-terminus: RAS guanyl-releasing protein 1 (795 aa).

The segment covering 1–12 (MGTLGKAREAPR) has biased composition (basic and acidic residues). Positions 1–37 (MGTLGKAREAPRKPCHGSRAGPKARLEAKSTNSPLPA) are disordered. The region spanning 53 to 176 (LGHLAKGASL…HLIDTTQINS (124 aa)) is the N-terminal Ras-GEF domain. The interval 57–110 (AKGASLDDLIDSCIQSFDADGNLCRNNQLLQVMLTMHRIIISSAELLQKVMNLY) is ras exchanger motif region; required for transforming activity. A Phosphothreonine; by PKC modification is found at T184. The 232-residue stretch at 205-436 (EPEELSEHLT…YELSYAREPR (232 aa)) folds into the Ras-GEF domain. 2 consecutive EF-hand domains span residues 470 to 505 (HVQRMVDSVFKNYDLDQDGYISQEEFEKIAASFPFS) and 506 to 532 (FCVMDKDREGLISRDEITAYFMRASSI). Residues D483, D485, D487, Y489, and E494 each coordinate Ca(2+). Residues 541 to 591 (PHNFQETTYLKPTFCDNCAGFLWGVIKQGYRCKDCGMNCHKQCKDLVVFEC) form a Phorbol-ester/DAG-type zinc finger. S597 carries the post-translational modification Phosphoserine. The suppress the PT region-mediated translocation to plasma membrane stretch occupies residues 686–694 (TPGHFVLSS). The segment at 717–795 (LVRKRAFVKW…LAQMDHGDSA (79 aa)) is PT region; mediates the BCR-dependent translocation to plasma membrane. The stretch at 738–779 (ELHLRLRTYQELEQEINTLKADNDALKIQLKYAQKKIESLQL) forms a coiled coil.

It belongs to the RASGRP family. In terms of assembly, homodimer. Forms a signaling complex with DGKZ and HRAS. Interacts with F-actin. Interacts with SKAP1. In terms of tissue distribution, detected in spleen and thymus. Expressed by mature thymocytes and to a lower extent by bone marrow-derived mast cells (at protein level). Detected in B-cells and keratinocytes (at protein level).

It is found in the cytoplasm. The protein localises to the cytosol. The protein resides in the cell membrane. Its subcellular location is the golgi apparatus membrane. It localises to the endoplasmic reticulum membrane. Autoinhibited. Activated by diacylglycerol and calcium binding, which induces a conformational change releasing the autoinhibitory state. Regulated by DGKA. Regulated by DGKZ. Regulated by PLC gamma and F-actin polymerization. In terms of biological role, functions as a calcium- and diacylglycerol (DAG)-regulated nucleotide exchange factor specifically activating Ras through the exchange of bound GDP for GTP. Activates the Erk/MAP kinase cascade. Regulates T-cell/B-cell development, homeostasis and differentiation by coupling T-lymphocyte/B-lymphocyte antigen receptors to Ras. Regulates NK cell cytotoxicity and ITAM-dependent cytokine production by activation of Ras-mediated ERK and JNK pathways. Functions in mast cell degranulation and cytokine secretion, regulating FcERI-evoked allergic responses. May also function in differentiation of other cell types. Proto-oncogene, which promotes T-cell lymphomagenesis when its expression is deregulated. This chain is RAS guanyl-releasing protein 1 (Rasgrp1), found in Mus musculus (Mouse).